The primary structure comprises 780 residues: 5-methyltetrahydropteroyltriglutamate--homocysteine methyltransferase (780 aa).

Residues 15 to 18 and K114 contribute to the 5-methyltetrahydropteroyltri-L-glutamate site; that span reads RELK. Residues 457–459 and E510 each bind L-homocysteine; that span reads IGS. L-methionine is bound by residues 457 to 459 and E510; that span reads IGS. 5-methyltetrahydropteroyltri-L-glutamate is bound by residues 541–542 and W587; that span reads RC. Residue D625 participates in L-homocysteine binding. Residue D625 participates in L-methionine binding. E631 contacts 5-methyltetrahydropteroyltri-L-glutamate. Residues H667, C669, and E691 each coordinate Zn(2+). H720 serves as the catalytic Proton donor. Residue C752 coordinates Zn(2+).

This sequence belongs to the vitamin-B12 independent methionine synthase family. Requires Zn(2+) as cofactor.

It catalyses the reaction 5-methyltetrahydropteroyltri-L-glutamate + L-homocysteine = tetrahydropteroyltri-L-glutamate + L-methionine. It functions in the pathway amino-acid biosynthesis; L-methionine biosynthesis via de novo pathway; L-methionine from L-homocysteine (MetE route): step 1/1. In terms of biological role, catalyzes the transfer of a methyl group from 5-methyltetrahydrofolate to homocysteine resulting in methionine formation. The chain is 5-methyltetrahydropteroyltriglutamate--homocysteine methyltransferase from Nitratidesulfovibrio vulgaris (strain DSM 19637 / Miyazaki F) (Desulfovibrio vulgaris).